The sequence spans 453 residues: Homeobox protein meis3 (453 aa).

Residues 33 to 64 are disordered; it reads HHSLSQSAPYGSTGAAHRVPMPPGMGSNDGLK. Residues 102–185 form the MEIS N-terminal domain; it reads GGDVCSSDSF…PIDLVIDDRD (84 aa). Positions 192–272 are disordered; the sequence is LEDFTGSCTS…RDKKRNKKRG (81 aa). The segment covering 197 to 209 has biased composition (polar residues); it reads GSCTSLSDQNNSW. The segment covering 218–230 has biased composition (low complexity); the sequence is STHSGTPGPSSGG. The span at 231–242 shows a compositional bias: polar residues; the sequence is LASQSGDNSSEQ. A DNA-binding region (homeobox) is located at residues 267–329; sequence RNKKRGIFPK…NARRRIVQPM (63 aa).

It belongs to the TALE/MEIS homeobox family.

The protein localises to the nucleus. Its function is as follows. A caudalizing protein which is required to pattern the anterior/posterior (A/P) axis during central nervous system (CNS) formation. Inhibits anterior neural expression and acts as a transcriptional activator to induce posterior neural gene expression. Maintains a proper A/P balance required for hindbrain formation by activating the FGF/MAPK pathway, which modulates the planar cell polarity (PCP) pathway. Interacts with retinoid signaling during hindbrain patterning. The chain is Homeobox protein meis3 from Xenopus tropicalis (Western clawed frog).